The sequence spans 207 residues: Thiamine-phosphate synthase (207 aa).

4-amino-2-methyl-5-(diphosphooxymethyl)pyrimidine contacts are provided by residues 37–41 and Asn69; that span reads QYRHK. Mg(2+) contacts are provided by Asp70 and Asp89. Residues Ser108 and Lys138 each contribute to the 4-amino-2-methyl-5-(diphosphooxymethyl)pyrimidine site. 2-[(2R,5Z)-2-carboxy-4-methylthiazol-5(2H)-ylidene]ethyl phosphate contacts are provided by residues Gly165 and 185–186; that span reads IS.

Belongs to the thiamine-phosphate synthase family. Requires Mg(2+) as cofactor.

The enzyme catalyses 2-[(2R,5Z)-2-carboxy-4-methylthiazol-5(2H)-ylidene]ethyl phosphate + 4-amino-2-methyl-5-(diphosphooxymethyl)pyrimidine + 2 H(+) = thiamine phosphate + CO2 + diphosphate. The catalysed reaction is 2-(2-carboxy-4-methylthiazol-5-yl)ethyl phosphate + 4-amino-2-methyl-5-(diphosphooxymethyl)pyrimidine + 2 H(+) = thiamine phosphate + CO2 + diphosphate. It carries out the reaction 4-methyl-5-(2-phosphooxyethyl)-thiazole + 4-amino-2-methyl-5-(diphosphooxymethyl)pyrimidine + H(+) = thiamine phosphate + diphosphate. It participates in cofactor biosynthesis; thiamine diphosphate biosynthesis; thiamine phosphate from 4-amino-2-methyl-5-diphosphomethylpyrimidine and 4-methyl-5-(2-phosphoethyl)-thiazole: step 1/1. Functionally, condenses 4-methyl-5-(beta-hydroxyethyl)thiazole monophosphate (THZ-P) and 2-methyl-4-amino-5-hydroxymethyl pyrimidine pyrophosphate (HMP-PP) to form thiamine monophosphate (TMP). The chain is Thiamine-phosphate synthase from Janthinobacterium sp. (strain Marseille) (Minibacterium massiliensis).